The primary structure comprises 215 residues: Hibernation-associated plasma protein HP-27 (215 aa).

The N-terminal stretch at 1–30 (MYEAGKRASFMGGAGIWILALSVLMHVVCS) is a signal peptide. The interval 34-79 (GNPESCNVPGPQGPPGMRGPPGTPGKPGPPGWNGFPGLPGPPGPPG) is disordered. Residues 43–81 (GPQGPPGMRGPPGTPGKPGPPGWNGFPGLPGPPGPPGMT) form the Collagen-like domain. Over residues 44 to 63 (PQGPPGMRGPPGTPGKPGPP) the composition is skewed to pro residues. Positions 85-215 (HSKGTSAFAV…VFSGFLIHEN (131 aa)) constitute a C1q domain. An N-linked (GlcNAc...) asparagine glycan is attached at N155.

Plasma; synthesized in the liver.

Its subcellular location is the secreted. Its function is as follows. Plasma proteins HP-20, HP-25, HP-27 and HP-55 form a 140 kDa complex via disulfide bonds in the plasma and are hibernation specific. The chain is Hibernation-associated plasma protein HP-27 from Tamias sibiricus (Siberian chipmunk).